The primary structure comprises 407 residues: Extracellular superoxide dismutase [Cu-Zn] 3 (407 aa).

The N-terminal stretch at 1–19 (MRLLSVLVFLISVISIAKA) is a signal peptide. Topologically, residues 20 to 386 (DYQYAFCKFN…SESYNDNEPG (367 aa)) are extracellular. Asparagine 51, asparagine 205, and asparagine 224 each carry an N-linked (GlcNAc...) asparagine glycan. Positions 245 and 247 each coordinate Cu cation. The N-linked (GlcNAc...) asparagine glycan is linked to asparagine 256. Residue histidine 263 participates in Cu cation binding. Residues histidine 263, histidine 271, histidine 280, and aspartate 283 each contribute to the Zn(2+) site. Residue histidine 320 participates in Cu cation binding. Residues asparagine 321 and asparagine 364 are each glycosylated (N-linked (GlcNAc...) asparagine). The helical transmembrane segment at 387–406 (SSSTVIPFFALIIFSIIFAL) threads the bilayer. Residue leucine 407 is a topological domain, cytoplasmic.

It belongs to the Cu-Zn superoxide dismutase family. Cu cation serves as cofactor. It depends on Zn(2+) as a cofactor.

The protein resides in the cell membrane. It catalyses the reaction 2 superoxide + 2 H(+) = H2O2 + O2. In terms of biological role, protect the extracellular space from toxic effect of reactive oxygen intermediates by converting superoxyde radicals into hydrogen peroxyde and oxygen. The protein is Extracellular superoxide dismutase [Cu-Zn] 3 (sodC) of Dictyostelium discoideum (Social amoeba).